Reading from the N-terminus, the 175-residue chain is Large ribosomal subunit protein uL6 (175 aa).

This sequence belongs to the universal ribosomal protein uL6 family. In terms of assembly, part of the 50S ribosomal subunit.

Its function is as follows. This protein binds to the 23S rRNA, and is important in its secondary structure. It is located near the subunit interface in the base of the L7/L12 stalk, and near the tRNA binding site of the peptidyltransferase center. This is Large ribosomal subunit protein uL6 from Xanthomonas oryzae pv. oryzae (strain MAFF 311018).